We begin with the raw amino-acid sequence, 101 residues long: Urease subunit beta (101 aa).

It belongs to the urease beta subunit family. As to quaternary structure, heterotrimer of UreA (gamma), UreB (beta) and UreC (alpha) subunits. Three heterotrimers associate to form the active enzyme.

It is found in the cytoplasm. The catalysed reaction is urea + 2 H2O + H(+) = hydrogencarbonate + 2 NH4(+). It functions in the pathway nitrogen metabolism; urea degradation; CO(2) and NH(3) from urea (urease route): step 1/1. In Burkholderia cenocepacia (strain ATCC BAA-245 / DSM 16553 / LMG 16656 / NCTC 13227 / J2315 / CF5610) (Burkholderia cepacia (strain J2315)), this protein is Urease subunit beta.